Here is a 106-residue protein sequence, read N- to C-terminus: VDAPADMVLKAPAGAKMTKAPVDFSHKGHAALDCTKCHHKWDGKAEVKKCSAEGCHVBTSKKGKKSTPKFYSAFHSKSDISCVGCHKALKKATGPTKCGDCHPKKK.

H26, H29, C34, C37, H38, H39, C50, C55, H56, H75, C82, C85, H86, C98, C101, and H102 together coordinate heme c.

Post-translationally, binds 4 heme c groups per subunit.

Participates in sulfate respiration coupled with phosphorylation by transferring electrons from the enzyme dehydrogenase to ferredoxin. The protein is Cytochrome c3 of Maridesulfovibrio salexigens (Desulfovibrio salexigens).